Reading from the N-terminus, the 177-residue chain is Ribosome maturation factor RimP (177 aa).

The protein belongs to the RimP family.

The protein resides in the cytoplasm. Its function is as follows. Required for maturation of 30S ribosomal subunits. This chain is Ribosome maturation factor RimP, found in Methylibium petroleiphilum (strain ATCC BAA-1232 / LMG 22953 / PM1).